A 440-amino-acid chain; its full sequence is D-serine dehydratase (440 aa).

Residue lysine 116 is modified to N6-(pyridoxal phosphate)lysine.

The protein belongs to the serine/threonine dehydratase family. DsdA subfamily. In terms of assembly, monomer. Pyridoxal 5'-phosphate serves as cofactor.

The catalysed reaction is D-serine = pyruvate + NH4(+). The sequence is that of D-serine dehydratase from Salmonella paratyphi A (strain ATCC 9150 / SARB42).